We begin with the raw amino-acid sequence, 359 residues long: Peptide chain release factor 1 (359 aa).

Q236 bears the N5-methylglutamine mark.

This sequence belongs to the prokaryotic/mitochondrial release factor family. Post-translationally, methylated by PrmC. Methylation increases the termination efficiency of RF1.

It localises to the cytoplasm. In terms of biological role, peptide chain release factor 1 directs the termination of translation in response to the peptide chain termination codons UAG and UAA. The chain is Peptide chain release factor 1 from Streptococcus pyogenes serotype M3 (strain ATCC BAA-595 / MGAS315).